Consider the following 126-residue polypeptide: Glycine cleavage system H protein (126 aa).

Positions T22–K104 constitute a Lipoyl-binding domain. K63 bears the N6-lipoyllysine mark.

The protein belongs to the GcvH family. The glycine cleavage system is composed of four proteins: P, T, L and H. (R)-lipoate serves as cofactor.

Functionally, the glycine cleavage system catalyzes the degradation of glycine. The H protein shuttles the methylamine group of glycine from the P protein to the T protein. In terms of biological role, is also involved in protein lipoylation via its role as an octanoyl/lipoyl carrier protein intermediate. The sequence is that of Glycine cleavage system H protein from Staphylococcus carnosus (strain TM300).